Consider the following 181-residue polypeptide: Putative manganese efflux pump MntP (181 aa).

Transmembrane regions (helical) follow at residues 5–25 (LIAL…IALG), 36–56 (MFKV…MGMV), 66–86 (GLFA…VMIV), 102–122 (IGLF…GLSL), 130–150 (ALAV…GLFI), and 158–178 (VGPY…VKLL).

This sequence belongs to the MntP (TC 9.B.29) family.

It localises to the cell membrane. In terms of biological role, probably functions as a manganese efflux pump. The chain is Putative manganese efflux pump MntP from Halalkalibacterium halodurans (strain ATCC BAA-125 / DSM 18197 / FERM 7344 / JCM 9153 / C-125) (Bacillus halodurans).